The following is a 439-amino-acid chain: 3-phosphoshikimate 1-carboxyvinyltransferase (439 aa).

The 3-phosphoshikimate site is built by Lys21, Ser22, and Arg26. Lys21 provides a ligand contact to phosphoenolpyruvate. 2 residues coordinate phosphoenolpyruvate: Gly94 and Arg122. 3-phosphoshikimate-binding residues include Ser167, Gln169, Asp320, and Lys347. Position 169 (Gln169) interacts with phosphoenolpyruvate. Catalysis depends on Asp320, which acts as the Proton acceptor. The phosphoenolpyruvate site is built by Arg351 and Arg395.

The protein belongs to the EPSP synthase family. In terms of assembly, monomer.

The protein localises to the cytoplasm. It catalyses the reaction 3-phosphoshikimate + phosphoenolpyruvate = 5-O-(1-carboxyvinyl)-3-phosphoshikimate + phosphate. Its pathway is metabolic intermediate biosynthesis; chorismate biosynthesis; chorismate from D-erythrose 4-phosphate and phosphoenolpyruvate: step 6/7. Its function is as follows. Catalyzes the transfer of the enolpyruvyl moiety of phosphoenolpyruvate (PEP) to the 5-hydroxyl of shikimate-3-phosphate (S3P) to produce enolpyruvyl shikimate-3-phosphate and inorganic phosphate. The protein is 3-phosphoshikimate 1-carboxyvinyltransferase of Hyphomonas neptunium (strain ATCC 15444).